Reading from the N-terminus, the 357-residue chain is RGG repeats nuclear RNA binding protein C (357 aa).

Ala2 bears the N-acetylalanine mark. Residues 25–232 are disordered; that stretch reads SQKVEKAAAA…AEEAEAREMT (208 aa). Residues 31 to 45 are compositionally biased toward low complexity; the sequence is AAAAVQPPKAAKFPT. 2 stretches are compositionally biased toward gly residues: residues 63 to 82 and 114 to 128; these read GGRG…GNGG and SRGG…GGGR. Over residues 143–155 the composition is skewed to basic and acidic residues; that stretch reads DVERPPRNYDRHS. The span at 159–172 shows a compositional bias: gly residues; sequence HGTGMKRNGGGRGN. Residues 190 to 232 are compositionally biased toward basic and acidic residues; that stretch reads EVEKSPVAEKQGGEDETPEAKKELTAEEKAQKEAEEAEAREMT. The FF domain occupies 239–299; that stretch reads ILEEKKKALQ…KDATEKAKKS (61 aa). The tract at residues 308 to 357 is disordered; sequence PADGKRYNGRGGGSRGRGGRGGRGEGGNQRYAKEAAAPAIGDTAQFPSLG. Residues 316–334 are compositionally biased toward gly residues; that stretch reads GRGGGSRGRGGRGGRGEGG. Ser355 is modified (phosphoserine).

Belongs to the SERBP1-HABP4 family.

It localises to the nucleus. The protein localises to the cytoplasm. Its subcellular location is the perinuclear region. Functionally, ribosome-binding protein that acts as a regulator of mRNA translation by promoting ribosome inactivation. Binds RNA. This chain is RGG repeats nuclear RNA binding protein C, found in Arabidopsis thaliana (Mouse-ear cress).